The chain runs to 198 residues: Peroxiredoxin-2 (198 aa).

Position 2 is an N-acetylalanine (Ala2). The Thioredoxin domain maps to 6–164 (AHIGKPAPDF…ALRLVQAFQY (159 aa)). Catalysis depends on Cys51, which acts as the Cysteine sulfenic acid (-SOH) intermediate. Ser112 bears the Phosphoserine mark. A Phosphothreonine modification is found at Thr182. Residue Lys196 is modified to N6-acetyllysine.

Belongs to the peroxiredoxin family. AhpC/Prx1 subfamily. In terms of assembly, homodimer; disulfide-linked, upon oxidation. 5 homodimers assemble to form a ring-like decamer. Interacts with TIPIN. Post-translationally, the enzyme can be inactivated by further oxidation of the cysteine sulfenic acid (C(P)-SOH) to sulphinic acid (C(P)-SO2H) instead of its condensation to a disulfide bond. It can be reactivated by forming a transient disulfide bond with sulfiredoxin SRXN1, which reduces the cysteine sulfinic acid in an ATP- and Mg-dependent manner. Acetylation increases resistance to transition to high molecular-mass complexes. Deacetylated by HDAC6 which decreases reducing activity.

It is found in the cytoplasm. It catalyses the reaction a hydroperoxide + [thioredoxin]-dithiol = an alcohol + [thioredoxin]-disulfide + H2O. In terms of biological role, thiol-specific peroxidase that catalyzes the reduction of hydrogen peroxide and organic hydroperoxides to water and alcohols, respectively. Plays a role in cell protection against oxidative stress by detoxifying peroxides and as sensor of hydrogen peroxide-mediated signaling events. Might participate in the signaling cascades of growth factors and tumor necrosis factor-alpha by regulating the intracellular concentrations of H(2)O(2). The polypeptide is Peroxiredoxin-2 (PRDX2) (Cricetulus griseus (Chinese hamster)).